Here is a 199-residue protein sequence, read N- to C-terminus: Putative acetyltransferase SACOL2570 (199 aa).

The protein belongs to the transferase hexapeptide repeat family.

The protein is Putative acetyltransferase SACOL2570 of Staphylococcus aureus (strain COL).